The chain runs to 181 residues: CDP-archaeol synthase (181 aa).

A run of 5 helical transmembrane segments spans residues Val7–Ala27, Leu55–Val75, Leu88–Leu108, Leu126–Glu146, and Thr147–Thr167.

This sequence belongs to the CDP-archaeol synthase family. Requires Mg(2+) as cofactor.

It is found in the cell membrane. It carries out the reaction 2,3-bis-O-(geranylgeranyl)-sn-glycerol 1-phosphate + CTP + H(+) = CDP-2,3-bis-O-(geranylgeranyl)-sn-glycerol + diphosphate. It participates in membrane lipid metabolism; glycerophospholipid metabolism. Catalyzes the formation of CDP-2,3-bis-(O-geranylgeranyl)-sn-glycerol (CDP-archaeol) from 2,3-bis-(O-geranylgeranyl)-sn-glycerol 1-phosphate (DGGGP) and CTP. This reaction is the third ether-bond-formation step in the biosynthesis of archaeal membrane lipids. This is CDP-archaeol synthase from Haloarcula marismortui (strain ATCC 43049 / DSM 3752 / JCM 8966 / VKM B-1809) (Halobacterium marismortui).